We begin with the raw amino-acid sequence, 270 residues long: Shikimate dehydrogenase (NADP(+)) (270 aa).

Shikimate is bound by residues 14-16 and T61; that span reads SKS. The Proton acceptor role is filled by K65. 2 residues coordinate shikimate: N86 and D101. Residues 126 to 130, 150 to 155, and M213 contribute to the NADP(+) site; these read GAGGA and NRTVSK. Residue Y215 participates in shikimate binding. G237 provides a ligand contact to NADP(+).

The protein belongs to the shikimate dehydrogenase family. In terms of assembly, homodimer.

The catalysed reaction is shikimate + NADP(+) = 3-dehydroshikimate + NADPH + H(+). It participates in metabolic intermediate biosynthesis; chorismate biosynthesis; chorismate from D-erythrose 4-phosphate and phosphoenolpyruvate: step 4/7. Functionally, involved in the biosynthesis of the chorismate, which leads to the biosynthesis of aromatic amino acids. Catalyzes the reversible NADPH linked reduction of 3-dehydroshikimate (DHSA) to yield shikimate (SA). This is Shikimate dehydrogenase (NADP(+)) from Hahella chejuensis (strain KCTC 2396).